We begin with the raw amino-acid sequence, 86 residues long: Mu-theraphotoxin-Cg2a 2 (86 aa).

The signal sequence occupies residues 1–21 (MKVSVVITLAVLGVMFVWASA). The propeptide occupies 22–50 (AELEERGSDQRDSPAWIKSMERIFQSEER). 3 disulfide bridges follow: Cys-52–Cys-66, Cys-59–Cys-71, and Cys-65–Cys-78. Phe-84 carries the post-translational modification Phenylalanine amide.

It belongs to the neurotoxin 10 (Hwtx-1) family. 37 (Jztx-31) subfamily. As to expression, expressed by the venom gland.

The protein resides in the secreted. Inhibits both peak current and fast inactivation of voltage-gated sodium channels (Nav) channels. Inhibits the inactivation of Nav on DRG neurons (EC(50)=1.77 uM) and peak current of cardiac myocytes (IC(50)=0.90 uM). The sequence is that of Mu-theraphotoxin-Cg2a 2 from Chilobrachys guangxiensis (Chinese earth tiger tarantula).